The following is a 181-amino-acid chain: Large ribosomal subunit protein uL6 (181 aa).

This sequence belongs to the universal ribosomal protein uL6 family. As to quaternary structure, part of the 50S ribosomal subunit.

In terms of biological role, this protein binds to the 23S rRNA, and is important in its secondary structure. It is located near the subunit interface in the base of the L7/L12 stalk, and near the tRNA binding site of the peptidyltransferase center. The protein is Large ribosomal subunit protein uL6 of Synechococcus sp. (strain JA-3-3Ab) (Cyanobacteria bacterium Yellowstone A-Prime).